The sequence spans 781 residues: Mitogen-activated protein kinase 7 (781 aa).

A disordered region spans residues 1 to 27 (MAEPLKEDDGEDGSGEPPGPVKAEPAG). N-acetylalanine is present on Ala-2. The required for cytoplasmic targeting stretch occupies residues 2–77 (AEPLKEDDGE…VVSSARRRLT (76 aa)). A Protein kinase domain is found at 55–347 (YEIIETIGNG…AAAALRHPFL (293 aa)). ATP-binding positions include 61 to 69 (IGNGAYGVV) and Lys-84. Positions 78-139 (GQQVAIKKIP…FKSVYVVLDL (62 aa)) are required for binding to MAP2K5. Positions 140 to 406 (MESDLHQIIH…QQIRFQPSLQ (267 aa)) are necessary for oligomerization. The Proton acceptor role is filled by Asp-182. The TXY signature appears at 219-221 (TEY). The segment at 402-708 (QPSLQPVASE…PKGSGAGYGV (307 aa)) is disordered. The segment at 407–781 (PVASEPGCPD…LADLPDLQEP (375 aa)) is may not be required for kinase activity; required to stimulate MEF2C activity. Pro residues-rich tracts occupy residues 433–445 (SPPP…PGPA) and 454–463 (QPPPPASEPA). Low complexity predominate over residues 476-486 (KAALKAALLKS). 3 stretches are compositionally biased toward basic and acidic residues: residues 502–519 (PEPR…EREE), 527–544 (RAKE…KERG), and 563–573 (DNDRSLLERWT). The Nuclear localization signal signature appears at 505 to 539 (RKPVTAQERQREREEKRRRRQERAKEREKRRQERE). 2 stretches are compositionally biased toward pro residues: residues 578–594 (PPAP…PPAG) and 601–614 (GPLP…PAPA). Low complexity-rich tracts occupy residues 615 to 632 (AGPA…LAPQ) and 642 to 652 (GPSALSVLPYF). Residues 653 to 664 (PSGPPPPDPGGA) show a composition bias toward pro residues. The span at 668–685 (STSESPDVTLVTQQLSKS) shows a compositional bias: polar residues. A Phosphoserine modification is found at Ser-685. Position 698 is a phosphothreonine (Thr-698).

It belongs to the protein kinase superfamily. CMGC Ser/Thr protein kinase family. MAP kinase subfamily. As to quaternary structure, interacts with MAP2K5. Forms oligomers. Interacts with MEF2A, MEF2C and MEF2D; the interaction phosphorylates the MEF2s and enhances transcriptional activity of MEF2A, MEF2C but not MEF2D. Interacts with SGK1. Interacts with PML. Interacts (via N-terminal half) with HSP90AB1-CDC37 chaperone complex in resting cells; the interaction is MAP2K5-independent and prevents MAPK7 from ubiquitination and proteasomal degradation. Interacts with STUB1/CHIP; the interaction is enhanced in the presence of IGF1 or MAP2K5 and promotes STUB1/CHIP E3 ligase activity. Mg(2+) serves as cofactor. Dually phosphorylated on Thr-219 and Tyr-221, which activates the enzyme.

It is found in the cytoplasm. The protein resides in the nucleus. The protein localises to the PML body. It catalyses the reaction L-seryl-[protein] + ATP = O-phospho-L-seryl-[protein] + ADP + H(+). The enzyme catalyses L-threonyl-[protein] + ATP = O-phospho-L-threonyl-[protein] + ADP + H(+). Activated by tyrosine and threonine phosphorylation. Activated in response to hyperosmolarity, hydrogen peroxide, and epidermal growth factor (EGF). Functionally, plays a role in various cellular processes such as proliferation, differentiation and cell survival. The upstream activator of MAPK7 is the MAPK kinase MAP2K5. Upon activation, it translocates to the nucleus and phosphorylates various downstream targets including MEF2C. EGF activates MAPK7 through a Ras-independent and MAP2K5-dependent pathway. As part of the MAPK/ERK signaling pathway, acts as a negative regulator of apoptosis in cardiomyocytes via interaction with STUB1/CHIP and promotion of STUB1-mediated ubiquitination and degradation of ICER-type isoforms of CREM. May have a role in muscle cell differentiation. May be important for endothelial function and maintenance of blood vessel integrity. MAP2K5 and MAPK7 interact specifically with one another and not with MEK1/ERK1 or MEK2/ERK2 pathways. Phosphorylates SGK1 at Ser-78 and this is required for growth factor-induced cell cycle progression. Involved in the regulation of p53/TP53 by disrupting the PML-MDM2 interaction. In Bos taurus (Bovine), this protein is Mitogen-activated protein kinase 7 (MAPK7).